The sequence spans 304 residues: N-acetylmuramic acid 6-phosphate etherase 1 (304 aa).

Over residues 1–10 (MENSHLGSLT) the composition is skewed to polar residues. The segment at 1–20 (MENSHLGSLTTERRNERSKR) is disordered. In terms of domain architecture, SIS spans 58–221 (AVGSLKKGGR…STAAMIKMGK (164 aa)). The active-site Proton donor is Glu86. Glu117 is an active-site residue.

Belongs to the GCKR-like family. MurNAc-6-P etherase subfamily. As to quaternary structure, homodimer.

The enzyme catalyses N-acetyl-D-muramate 6-phosphate + H2O = N-acetyl-D-glucosamine 6-phosphate + (R)-lactate. Its pathway is amino-sugar metabolism; N-acetylmuramate degradation. Specifically catalyzes the cleavage of the D-lactyl ether substituent of MurNAc 6-phosphate, producing GlcNAc 6-phosphate and D-lactate. This is N-acetylmuramic acid 6-phosphate etherase 1 from Bacillus licheniformis (strain ATCC 14580 / DSM 13 / JCM 2505 / CCUG 7422 / NBRC 12200 / NCIMB 9375 / NCTC 10341 / NRRL NRS-1264 / Gibson 46).